Reading from the N-terminus, the 670-residue chain is Tyramine beta-hydroxylase (670 aa).

Basic residues predominate over residues His26–Lys35. The interval His26–Arg63 is disordered. Positions Gln38–Gln61 are enriched in low complexity. The helical transmembrane segment at Pro65–Thr81 threads the bilayer. A DOMON domain is found at Lys104–Gly220. Residue Asn235 is glycosylated (N-linked (GlcNAc...) asparagine). Tyr281 is an active-site residue. 2 disulfide bridges follow: Cys283–Cys334 and Cys319–Cys344. Positions 312 and 313 each coordinate Cu(2+). Residues His382, His461, His463, and Met536 each contribute to the Cu(2+) site. 3 cysteine pairs are disulfide-bonded: Cys439/Cys552, Cys443/Cys613, and Cys515/Cys537. The active site involves His461. Residue Asn614 is glycosylated (N-linked (GlcNAc...) asparagine).

It belongs to the copper type II ascorbate-dependent monooxygenase family. As to quaternary structure, is most likely a monomer under physiological conditions, although under conditions of high pH and low ionic strength the dimeric form predominates. Both forms are equally active. Cu(2+) is required as a cofactor. In terms of tissue distribution, present in head and in neurons innervating the oviduct (at protein level).

The protein resides in the membrane. It carries out the reaction tyramine + L-ascorbate + O2 = (R)-octopamine + L-dehydroascorbate + H2O. Functionally, catalyzes the hydroxylation of tyramine into octopamine, a neurotransmitter involved in ovulation and locomotion. Functions in an amine-mediated Bacc-dependent signaling pathway that negatively regulates acute ethanol sensitivity. Involved in facilitation of nociceptive escape behavior in response to potentially damaging stimuli, such as high temperatures. The chain is Tyramine beta-hydroxylase (Tbh) from Drosophila melanogaster (Fruit fly).